Reading from the N-terminus, the 40-residue chain is uncharacterized protein (40 aa).

This is an uncharacterized protein from Streptomyces peucetius.